We begin with the raw amino-acid sequence, 76 residues long: Conotoxin Lt6.1 (76 aa).

An N-terminal signal peptide occupies residues 1–22 (MKLTCVLIIAVLFLMDNQLITA). Positions 23–48 (DYPRDEQVYRAVRLRDAMQKSKGSGS) are excised as a propeptide. 3 disulfides stabilise this stretch: C49–C62, C56–C67, and C61–C75.

It belongs to the conotoxin O1 superfamily. Expressed by the venom duct.

Its subcellular location is the secreted. The chain is Conotoxin Lt6.1 from Conus litteratus (Lettered cone).